Consider the following 339-residue polypeptide: EEIG family member 2 (339 aa).

The C2 NT-type domain occupies 1 to 111 (MRLLDGGSFT…ILKVLISMQL (111 aa)). Residue serine 197 is modified to Phosphoserine. The segment at 226–262 (TEPITAEPSPDPTAAAATATTTTAKEEEASEKLARCP) is disordered. Residues 230-248 (TAEPSPDPTAAAATATTTT) show a composition bias toward low complexity. Positions 249 to 259 (AKEEEASEKLA) are enriched in basic and acidic residues. 5 positions are modified to phosphoserine: serine 255, serine 267, serine 299, serine 300, and serine 329.

Belongs to the EEIG family. Expressed in bone marrow-derived macrophages.

The polypeptide is EEIG family member 2 (Eeig2) (Mus musculus (Mouse)).